Reading from the N-terminus, the 296-residue chain is dTDP-4-dehydrorhamnose reductase (296 aa).

NADH is bound by residues 10–12 (GQI), 35–36 (DL), and 59–61 (AYT). Residues 11 to 12 (QI), 35 to 36 (DL), and 59 to 61 (AYT) each bind NADPH. 100 to 101 (TD) contributes to the dTDP-beta-L-rhamnose binding site. NADH contacts are provided by tyrosine 124 and lysine 128. Positions 124 and 128 each coordinate NADPH. The active-site Proton donor/acceptor is tyrosine 124. Tryptophan 149 contributes to the dTDP-beta-L-rhamnose binding site.

Belongs to the dTDP-4-dehydrorhamnose reductase family. As to quaternary structure, homodimer. The cofactor is Mg(2+).

The catalysed reaction is dTDP-beta-L-rhamnose + NADP(+) = dTDP-4-dehydro-beta-L-rhamnose + NADPH + H(+). It functions in the pathway carbohydrate biosynthesis; dTDP-L-rhamnose biosynthesis. In terms of biological role, involved in the biosynthesis of the dTDP-L-rhamnose which is an important component of lipopolysaccharide (LPS). Catalyzes the reduction of dTDP-6-deoxy-L-lyxo-4-hexulose to yield dTDP-L-rhamnose. RmlD uses NADH and NADPH nearly equally well. In Sinorhizobium fredii (strain NBRC 101917 / NGR234), this protein is dTDP-4-dehydrorhamnose reductase.